We begin with the raw amino-acid sequence, 467 residues long: 3-isopropylmalate dehydratase large subunit (467 aa).

[4Fe-4S] cluster is bound by residues C348, C409, and C412. A disordered region spans residues 423-448 (NERSISTSNRNFEGRQGKGSRTHLAS).

Belongs to the aconitase/IPM isomerase family. LeuC type 1 subfamily. As to quaternary structure, heterodimer of LeuC and LeuD. [4Fe-4S] cluster is required as a cofactor.

The enzyme catalyses (2R,3S)-3-isopropylmalate = (2S)-2-isopropylmalate. Its pathway is amino-acid biosynthesis; L-leucine biosynthesis; L-leucine from 3-methyl-2-oxobutanoate: step 2/4. Its function is as follows. Catalyzes the isomerization between 2-isopropylmalate and 3-isopropylmalate, via the formation of 2-isopropylmaleate. The polypeptide is 3-isopropylmalate dehydratase large subunit (Bifidobacterium longum (strain DJO10A)).